Reading from the N-terminus, the 198-residue chain is Transcription factor elt-7 (198 aa).

Over residues 1 to 18 the composition is skewed to polar residues; that stretch reads MLPETTTLQPLPSVTTIM. Residues 1 to 20 form a disordered region; sequence MLPETTTLQPLPSVTTIMNE. The segment at 143–167 adopts a GATA-type zinc-finger fold; sequence CSHCSTTTTTLWRKNDEGNLECNAC.

The protein localises to the nucleus. Its function is as follows. Transcriptional activator that binds to the consensus sequence 5'-[AT]GATA[AG]-3'. Required for gut-specific differentiation, specifically acting with the GATA region-binding transcription factor elt-2 to control normal gene expression and promote normal formation of the intestine. May have a protective role in response to infection by Gram-negative bacteria such as P.aeruginosa. The sequence is that of Transcription factor elt-7 from Caenorhabditis elegans.